We begin with the raw amino-acid sequence, 372 residues long: Flagellar P-ring protein (372 aa).

A signal peptide spans 1–29 (MPARPIPVPAFALALALAAALAVPAPAAA).

It belongs to the FlgI family. The basal body constitutes a major portion of the flagellar organelle and consists of four rings (L,P,S, and M) mounted on a central rod.

Its subcellular location is the periplasm. The protein localises to the bacterial flagellum basal body. Functionally, assembles around the rod to form the L-ring and probably protects the motor/basal body from shearing forces during rotation. The sequence is that of Flagellar P-ring protein from Anaeromyxobacter dehalogenans (strain 2CP-1 / ATCC BAA-258).